Reading from the N-terminus, the 798-residue chain is MNRFLEFSNNFLEVAGNTINNISSKSITDNVGNVWGNITGGRVGQVYDINGRRVTEVKLVAEGGFGFVYLVRDDYNNMYALKRMFIQERERLEAMKNEIDVMQKLRNNPNIVKLEGFKINENRNTRETEVLMLMEYCSGGSVLDIMNARGEFTRLEEREILAIFSDVCNGVLAMHQQQPPIAHRDLKIENVLYCEHSNRYKLCDFGSSTIKTFNTATERGKAEDDINMFTTLFYRAPEMVDLYRGQIIDEKVDVWALGCLLFKMAFYVDPFDGGSLQIINNNYKIPDNSKYSNNFHKLIQFILVADPTQRPSINDLLNYLNEIRGSSRRGLQTFSSNNNNSNNNSNNNSNNNSNNNSVNNSSNSINRPIRTSSSSNSTPNFNSPNTNNNNYNNNNNNSKNYGNTPNSTPPNAKKNIFDILGDDTTSSTSNSNNSPSVSRNNINNNSNNFNNNNNNNNNNNNNNNNNNNNNNNNNTNNNNSNNNNYNNNNNKFDEFESWGNTPLQHPSPSNSNSNVIINNTNSSGKNNQNKSNSGNGNFFDNDFEFEGFVSPTTNGSTNFEVNTTNTNVSLNSSTHSSSSFNNSSNNNNTNNSSVSVGSSINNSGTRLMNNSSGSLPQSRQSSFNSTPQQQQQQFNSSTNSGSYNNLTSSFNNLNISTSSSASISSSGGVSNNSDNSWNVTLTPSQSNKNSTGNLKPLNNNNNNNNNNNNRFANNTNSSRDYSFDFSSPNTSNNNDFGSFVQPSSSSSLNTTHFSKPNYNVNLNQTTSMTNNYNNNNYNNNNNSNNNNNNSKVFDFGIL.

The 271-residue stretch at 54 to 324 (VTEVKLVAEG…DLLNYLNEIR (271 aa)) folds into the Protein kinase domain. ATP-binding positions include 60–68 (VAEGGFGFV) and Lys82. Asp185 (proton acceptor) is an active-site residue. 3 disordered regions span residues 330 to 538 (GLQT…NGNF), 553 to 645 (TNGS…SYNN), and 659 to 798 (SSAS…FGIL). Low complexity-rich tracts occupy residues 335–406 (SSNN…NTPN), 429–490 (SNSN…NNNN), 506–538 (PSPS…NGNF), 557–603 (TNFE…INNS), 611–642 (SSGS…NSGS), and 659–678 (SSAS…NSWN). Residues 679 to 697 (VTLTPSQSNKNSTGNLKPL) show a composition bias toward polar residues. A compositionally biased stretch (low complexity) spans 698–716 (NNNNNNNNNNNNRFANNTN). Residues 717–769 (SSRDYSFDFSSPNTSNNNDFGSFVQPSSSSSLNTTHFSKPNYNVNLNQTTSMT) show a composition bias toward polar residues. Residues 770–790 (NNYNNNNYNNNNNSNNNNNNS) are compositionally biased toward low complexity.

It belongs to the protein kinase superfamily. Ser/Thr protein kinase family.

It catalyses the reaction L-seryl-[protein] + ATP = O-phospho-L-seryl-[protein] + ADP + H(+). The catalysed reaction is L-threonyl-[protein] + ATP = O-phospho-L-threonyl-[protein] + ADP + H(+). This is Probable serine/threonine-protein kinase DDB_G0276461 from Dictyostelium discoideum (Social amoeba).